The chain runs to 278 residues: Shikimate dehydrogenase (NADP(+)) (278 aa).

Shikimate-binding positions include 23–25 (SRS) and Thr70. Lys74 acts as the Proton acceptor in catalysis. An NADP(+)-binding site is contributed by Glu86. Shikimate is bound by residues Asn95 and Asp110. Residues 135–139 (GAGGA), 159–164 (NRTKEK), and Met224 each bind NADP(+). A shikimate-binding site is contributed by Tyr226. Gly248 serves as a coordination point for NADP(+).

Belongs to the shikimate dehydrogenase family. As to quaternary structure, homodimer.

It carries out the reaction shikimate + NADP(+) = 3-dehydroshikimate + NADPH + H(+). It functions in the pathway metabolic intermediate biosynthesis; chorismate biosynthesis; chorismate from D-erythrose 4-phosphate and phosphoenolpyruvate: step 4/7. Its function is as follows. Involved in the biosynthesis of the chorismate, which leads to the biosynthesis of aromatic amino acids. Catalyzes the reversible NADPH linked reduction of 3-dehydroshikimate (DHSA) to yield shikimate (SA). This chain is Shikimate dehydrogenase (NADP(+)), found in Alcanivorax borkumensis (strain ATCC 700651 / DSM 11573 / NCIMB 13689 / SK2).